Consider the following 84-residue polypeptide: Hepcidin (84 aa).

An N-terminal signal peptide occupies residues 1–24 (MALSSQIWAACLLLLLLLASLTSG). Positions 25-54 (SVFPQQTGQLAELQPQDRAGARASWMPMFQ) are excised as a propeptide. 4 disulfides stabilise this stretch: cysteine 66–cysteine 82, cysteine 69–cysteine 72, cysteine 70–cysteine 78, and cysteine 73–cysteine 81.

This sequence belongs to the hepcidin family. In terms of assembly, interacts with SLC40A1; this interaction promotes SLC40A1 rapid ubiquitination. Highest expression in liver and to a lesser extent in heart and brain. Low levels in lung, tonsils, salivary gland, trachea, prostate gland, adrenal gland and thyroid gland. Secreted into the urine and blood. Expressed by hepatocytes.

It localises to the secreted. Its function is as follows. Liver-produced hormone that constitutes the main circulating regulator of iron absorption and distribution across tissues. Acts by promoting endocytosis and degradation of ferroportin/SLC40A1, leading to the retention of iron in iron-exporting cells and decreased flow of iron into plasma. Controls the major flows of iron into plasma: absorption of dietary iron in the intestine, recycling of iron by macrophages, which phagocytose old erythrocytes and other cells, and mobilization of stored iron from hepatocytes. In terms of biological role, has strong antimicrobial activity against E.coli ML35P N.cinerea and weaker against S.epidermidis, S.aureus and group b streptococcus bacteria. Active against the fungus C.albicans. No activity against P.aeruginosa. The chain is Hepcidin from Homo sapiens (Human).